Reading from the N-terminus, the 642-residue chain is Phosphomethylpyrimidine synthase (642 aa).

Substrate is bound by residues N235, M264, Y293, H329, 349 to 351 (SRG), 390 to 393 (DGLR), and E429. H433 is a binding site for Zn(2+). Y456 contacts substrate. H497 contributes to the Zn(2+) binding site. 3 residues coordinate [4Fe-4S] cluster: C577, C580, and C585.

Belongs to the ThiC family. Homodimer. The cofactor is [4Fe-4S] cluster.

The enzyme catalyses 5-amino-1-(5-phospho-beta-D-ribosyl)imidazole + S-adenosyl-L-methionine = 4-amino-2-methyl-5-(phosphooxymethyl)pyrimidine + CO + 5'-deoxyadenosine + formate + L-methionine + 3 H(+). Its pathway is cofactor biosynthesis; thiamine diphosphate biosynthesis. In terms of biological role, catalyzes the synthesis of the hydroxymethylpyrimidine phosphate (HMP-P) moiety of thiamine from aminoimidazole ribotide (AIR) in a radical S-adenosyl-L-methionine (SAM)-dependent reaction. This Alteromonas mediterranea (strain DSM 17117 / CIP 110805 / LMG 28347 / Deep ecotype) protein is Phosphomethylpyrimidine synthase.